A 415-amino-acid chain; its full sequence is Lipid-A-disaccharide synthase (415 aa).

The disordered stretch occupies residues 1-21 (MNSLPESGSDGQSSADPSQKA).

This sequence belongs to the LpxB family.

It carries out the reaction a lipid X + a UDP-2-N,3-O-bis[(3R)-3-hydroxyacyl]-alpha-D-glucosamine = a lipid A disaccharide + UDP + H(+). It participates in bacterial outer membrane biogenesis; LPS lipid A biosynthesis. Its function is as follows. Condensation of UDP-2,3-diacylglucosamine and 2,3-diacylglucosamine-1-phosphate to form lipid A disaccharide, a precursor of lipid A, a phosphorylated glycolipid that anchors the lipopolysaccharide to the outer membrane of the cell. The polypeptide is Lipid-A-disaccharide synthase (Gluconobacter oxydans (strain 621H) (Gluconobacter suboxydans)).